A 155-amino-acid polypeptide reads, in one-letter code: Small ribosomal subunit protein uS7 (155 aa).

The protein belongs to the universal ribosomal protein uS7 family. Part of the 30S ribosomal subunit. Contacts proteins S9 and S11.

In terms of biological role, one of the primary rRNA binding proteins, it binds directly to 16S rRNA where it nucleates assembly of the head domain of the 30S subunit. Is located at the subunit interface close to the decoding center, probably blocks exit of the E-site tRNA. This is Small ribosomal subunit protein uS7 from Xylella fastidiosa (strain M23).